A 249-amino-acid chain; its full sequence is Molybdate/tungstate transport system permease protein WtpB (249 aa).

The Cytoplasmic segment spans residues 1–10 (MDRRDYLAYA). A helical membrane pass occupies residues 11-31 (FAGLGAFLVAFIGLPLFMIFI). At 32–56 (KQAYDLEALQRTLVDPLVIESIRNS) the chain is on the extracellular side. The ABC transmembrane type-1 domain maps to 53 to 239 (IRNSLFTATV…TISLAVFIFL (187 aa)). A helical transmembrane segment spans residues 57 to 77 (LFTATVSTLLGILFGVPLGYV). The Cytoplasmic portion of the chain corresponds to 78–96 (LARKEFKGKNFVQALIDTP). A helical transmembrane segment spans residues 97 to 117 (IVIPHSVVGIMLLVTFSDAIL). Residue Asp118 is a topological domain, extracellular. A helical transmembrane segment spans residues 119–139 (NYKGIVAVMLFVSSPFIVNSA). At 140–179 (RDGFLSVDEKLEYVARTLGASGLRTFFSVTLPNAIHSIAS) the chain is on the cytoplasmic side. Residues 180 to 200 (GAIMAWARAISEVGAILIVAY) traverse the membrane as a helical segment. Residues 201-223 (YPKTAQVLIMEYFNNYGLRASRP) are Extracellular-facing. Residues 224–244 (IAVILVTISLAVFIFLRWLVG) traverse the membrane as a helical segment. Over 245 to 249 (RGRNA) the chain is Cytoplasmic.

It belongs to the binding-protein-dependent transport system permease family. The complex is composed of two ATP-binding proteins (WtpC), two transmembrane proteins (WtpB) and a solute-binding protein (WtpA).

Its subcellular location is the cell membrane. In terms of biological role, part of the ABC transporter complex WtpABC involved in molybdate/tungstate import. Probably responsible for the translocation of the substrate across the membrane. The chain is Molybdate/tungstate transport system permease protein WtpB from Pyrococcus furiosus (strain ATCC 43587 / DSM 3638 / JCM 8422 / Vc1).